The chain runs to 883 residues: Valine--tRNA ligase (883 aa).

The short motif at 46 to 56 (PNVTGKLHLGH) is the 'HIGH' region element. Positions 520-524 (KMSKS) match the 'KMSKS' region motif. Lysine 523 lines the ATP pocket. The stretch at 809 to 883 (LADLLNVEEE…RIKEMEKLIK (75 aa)) forms a coiled coil.

It belongs to the class-I aminoacyl-tRNA synthetase family. ValS type 1 subfamily. In terms of assembly, monomer.

It localises to the cytoplasm. The enzyme catalyses tRNA(Val) + L-valine + ATP = L-valyl-tRNA(Val) + AMP + diphosphate. In terms of biological role, catalyzes the attachment of valine to tRNA(Val). As ValRS can inadvertently accommodate and process structurally similar amino acids such as threonine, to avoid such errors, it has a 'posttransfer' editing activity that hydrolyzes mischarged Thr-tRNA(Val) in a tRNA-dependent manner. The sequence is that of Valine--tRNA ligase from Streptococcus mutans serotype c (strain ATCC 700610 / UA159).